Here is an 842-residue protein sequence, read N- to C-terminus: DNA mismatch repair protein MutS (842 aa).

Gly-596–Ser-603 contributes to the ATP binding site.

The protein belongs to the DNA mismatch repair MutS family.

Functionally, this protein is involved in the repair of mismatches in DNA. It is possible that it carries out the mismatch recognition step. This protein has a weak ATPase activity. This chain is DNA mismatch repair protein MutS, found in Exiguobacterium sp. (strain ATCC BAA-1283 / AT1b).